The following is a 409-amino-acid chain: uncharacterized protein (409 aa).

The next 10 helical transmembrane spans lie at 53–73, 83–103, 115–135, 141–161, 183–203, 205–225, 243–263, 265–285, 299–319, and 329–349; these read IITL…YVHC, WCYF…NVDG, LGEL…AIVM, IGPY…YLAH, VLFM…WTYG, STTV…VTCL, CLLQ…WASV, NLIT…FGYI, CSLF…SILA, and TVAL…FSYF. Residues 388–401 show a composition bias toward polar residues; it reads EEGSSSIGNSTDDI. The disordered stretch occupies residues 388–409; that stretch reads EEGSSSIGNSTDDINPSEIEEI.

Belongs to the CDP-alcohol phosphatidyltransferase class-I family.

It localises to the membrane. This is an uncharacterized protein from Dictyostelium discoideum (Social amoeba).